The primary structure comprises 479 residues: Dihydrolipoyl dehydrogenase (479 aa).

FAD contacts are provided by residues 41-50 (EKRGALGGTC), Lys59, Ala124, and 153-155 (TGS). Cysteines 50 and 55 form a disulfide. NAD(+)-binding positions include 190–197 (GGGVIGLE), Glu213, Ile247, and Gly284. Residues Asp325 and 332–335 (MLAH) each bind FAD. The Proton acceptor role is filled by His458.

Belongs to the class-I pyridine nucleotide-disulfide oxidoreductase family. As to quaternary structure, homodimer. The cofactor is FAD.

It carries out the reaction N(6)-[(R)-dihydrolipoyl]-L-lysyl-[protein] + NAD(+) = N(6)-[(R)-lipoyl]-L-lysyl-[protein] + NADH + H(+). The sequence is that of Dihydrolipoyl dehydrogenase from Trypanosoma brucei brucei.